The following is a 453-amino-acid chain: Cyclic GMP-AMP phosphodiesterase SMPDL3A (453 aa).

Residues 1-22 form the signal peptide; the sequence is MALVRALVCCLLTAWHCRSGLG. Positions 45 and 47 each coordinate Zn(2+). Cys-62 and Cys-81 are disulfide-bonded. Residue Asn-69 is glycosylated (N-linked (GlcNAc...) asparagine). Asp-110 is a binding site for Zn(2+). An ATP-binding site is contributed by His-114. Asn-131 carries N-linked (GlcNAc...) asparagine glycosylation. Asn-151 contributes to the Zn(2+) binding site. ATP-binding residues include Asn-151 and His-152. 2 N-linked (GlcNAc...) asparagine glycosylation sites follow: Asn-222 and Asn-238. His-252 contacts Zn(2+). Asn-263 is a glycosylation site (N-linked (GlcNAc...) asparagine). Residues His-293 and His-295 each contribute to the Zn(2+) site. An N-linked (GlcNAc...) asparagine glycan is attached at Asn-356. Intrachain disulfides connect Cys-420–Cys-424 and Cys-430–Cys-443. N-linked (GlcNAc...) asparagine glycosylation occurs at Asn-437.

This sequence belongs to the acid sphingomyelinase family. Monomer. Homodimer; homodimerizes following 2',3'-cGAMP-binding. Zn(2+) serves as cofactor. N-glycosylation is required for protein maturation, secretion and phosphodiesterase activity. As to expression, detected in blood serum. Detected in macrophages (at protein level).

The protein resides in the secreted. It catalyses the reaction 2',3'-cGAMP + H2O = 5'-pGpA(2'-5') + H(+). The enzyme catalyses 5'-pGpA(2'-5') + H2O = 5'-GpA(2'-5') + phosphate. The catalysed reaction is a ribonucleoside 5'-triphosphate + H2O = a ribonucleoside 5'-diphosphate + phosphate + H(+). It carries out the reaction ATP + H2O = ADP + phosphate + H(+). With respect to regulation, requires micromolar levels of Zn(2+) for activity. Inhibited by millimolar levels of Zn(2+). Functionally, cyclic-nucleotide phosphodiesterase that acts as a negative regulator of innate immunity by mediating degradation of 2',3'-cGAMP, thereby inhibiting the cGAS-STING signaling. Specifically linearizes 2',3'-cGAMP into 2'5'-bond pGpA and further hydrolyzes pGpA to produce GpA. Also has in vitro nucleotide phosphodiesterase activity with nucleoside triphosphates, such as ATP. Has in vitro activity with p-nitrophenyl-TMP. Has lower activity with nucleoside diphosphates, and no activity with nucleoside monophosphates. Has in vitro activity with CDP-choline, giving rise to CMP and phosphocholine. Has in vitro activity with CDP-ethanolamine. Does not have sphingomyelin phosphodiesterase activity. The sequence is that of Cyclic GMP-AMP phosphodiesterase SMPDL3A from Homo sapiens (Human).